Here is a 168-residue protein sequence, read N- to C-terminus: Plastocyanin, chloroplastic (168 aa).

Residues 1–70 (MASVAAAAVS…SSLLLVASAN (70 aa)) constitute a chloroplast transit peptide. Residues 71 to 168 (AATVKMGGDD…AGMKGVVTVS (98 aa)) enclose the Plastocyanin-like domain. His108, Cys153, His156, and Met161 together coordinate Cu cation.

It belongs to the plastocyanin family. Requires Cu(2+) as cofactor.

The protein localises to the plastid. It is found in the chloroplast thylakoid membrane. Functionally, participates in electron transfer between P700 and the cytochrome b6-f complex in photosystem I. The chain is Plastocyanin, chloroplastic (PETE) from Physcomitrium patens (Spreading-leaved earth moss).